An 882-amino-acid polypeptide reads, in one-letter code: Alanine--tRNA ligase (882 aa).

The Zn(2+) site is built by histidine 570, histidine 574, cysteine 672, and histidine 676.

The protein belongs to the class-II aminoacyl-tRNA synthetase family. Zn(2+) is required as a cofactor.

It is found in the cytoplasm. The catalysed reaction is tRNA(Ala) + L-alanine + ATP = L-alanyl-tRNA(Ala) + AMP + diphosphate. Functionally, catalyzes the attachment of alanine to tRNA(Ala) in a two-step reaction: alanine is first activated by ATP to form Ala-AMP and then transferred to the acceptor end of tRNA(Ala). Also edits incorrectly charged Ser-tRNA(Ala) and Gly-tRNA(Ala) via its editing domain. This is Alanine--tRNA ligase from Xanthomonas campestris pv. campestris (strain ATCC 33913 / DSM 3586 / NCPPB 528 / LMG 568 / P 25).